Reading from the N-terminus, the 198-residue chain is 7-methyl-GTP pyrophosphatase (198 aa).

Aspartate 75 serves as the catalytic Proton acceptor.

It belongs to the Maf family. YceF subfamily. A divalent metal cation serves as cofactor.

The protein localises to the cytoplasm. The enzyme catalyses N(7)-methyl-GTP + H2O = N(7)-methyl-GMP + diphosphate + H(+). In terms of biological role, nucleoside triphosphate pyrophosphatase that hydrolyzes 7-methyl-GTP (m(7)GTP). May have a dual role in cell division arrest and in preventing the incorporation of modified nucleotides into cellular nucleic acids. The protein is 7-methyl-GTP pyrophosphatase of Nitrosospira multiformis (strain ATCC 25196 / NCIMB 11849 / C 71).